A 362-amino-acid polypeptide reads, in one-letter code: UDP-N-acetylglucosamine--N-acetylmuramyl-(pentapeptide) pyrophosphoryl-undecaprenol N-acetylglucosamine transferase (362 aa).

UDP-N-acetyl-alpha-D-glucosamine-binding positions include 14–16, asparagine 126, arginine 166, serine 193, and glutamine 294; that span reads TGG.

This sequence belongs to the glycosyltransferase 28 family. MurG subfamily.

It localises to the cell inner membrane. It catalyses the reaction di-trans,octa-cis-undecaprenyl diphospho-N-acetyl-alpha-D-muramoyl-L-alanyl-D-glutamyl-meso-2,6-diaminopimeloyl-D-alanyl-D-alanine + UDP-N-acetyl-alpha-D-glucosamine = di-trans,octa-cis-undecaprenyl diphospho-[N-acetyl-alpha-D-glucosaminyl-(1-&gt;4)]-N-acetyl-alpha-D-muramoyl-L-alanyl-D-glutamyl-meso-2,6-diaminopimeloyl-D-alanyl-D-alanine + UDP + H(+). It functions in the pathway cell wall biogenesis; peptidoglycan biosynthesis. Cell wall formation. Catalyzes the transfer of a GlcNAc subunit on undecaprenyl-pyrophosphoryl-MurNAc-pentapeptide (lipid intermediate I) to form undecaprenyl-pyrophosphoryl-MurNAc-(pentapeptide)GlcNAc (lipid intermediate II). In Paracoccus denitrificans (strain Pd 1222), this protein is UDP-N-acetylglucosamine--N-acetylmuramyl-(pentapeptide) pyrophosphoryl-undecaprenol N-acetylglucosamine transferase.